The primary structure comprises 161 residues: Ribosome maturation factor RimP (161 aa).

This sequence belongs to the RimP family.

It is found in the cytoplasm. Functionally, required for maturation of 30S ribosomal subunits. The polypeptide is Ribosome maturation factor RimP (Janthinobacterium sp. (strain Marseille) (Minibacterium massiliensis)).